Reading from the N-terminus, the 300-residue chain is Zinc finger CCCH domain-containing protein 14 (300 aa).

Residues 1 to 38 (MEVGGRKRGKPDGANGAGGKRARESESFQTGVGSKSKP) are disordered. 2 C3H1-type zinc fingers span residues 33–61 (GSKS…HHFP) and 99–127 (TVKT…HGER). The region spanning 170 to 234 (SATAKISVDA…DQIKNASAMV (65 aa)) is the KH domain. Residues 243–262 (GGAPPQGKKPVGGSHRGGGP) form a disordered region. The C3H1-type 3 zinc finger occupies 265 to 292 (NFKTKLCENFTKGSCTFGDRCHFAHGEN).

This chain is Zinc finger CCCH domain-containing protein 14, found in Oryza sativa subsp. japonica (Rice).